The chain runs to 1041 residues: MENMFLQSSMLTCIFLLISGSCELCAEENFSRSYPCDEKKQNDSVIAECSNRRLQEVPQTVGKYVTELDLSDNFITHITNESFQGLQNLTKINLNHNPNVQHQNGNPGIQSNGLNITDGAFLNLKNLRELLLEDNQLPQIPSGLPESLTELSLIQNNIYNITKEGISRLINLKNLYLAWNCYFNKVCEKTNIEDGVFETLTNLELLSLSFNSLSHVPPKLPSSLRKLFLSNTQIKYISEEDFKGLINLTLLDLSGNCPRCFNAPFPCVPCDGGASINIDRFAFQNLTQLRYLNLSSTSLRKINAAWFKNMPHLKVLDLEFNYLVGEIASGAFLTMLPRLEILDLSFNYIKGSYPQHINISRNFSKLLSLRALHLRGYVFQELREDDFQPLMQLPNLSTINLGINFIKQIDFKLFQNFSNLEIIYLSENRISPLVKDTRQSYANSSSFQRHIRKRRSTDFEFDPHSNFYHFTRPLIKPQCAAYGKALDLSLNSIFFIGPNQFENLPDIACLNLSANSNAQVLSGTEFSAIPHVKYLDLTNNRLDFDNASALTELSDLEVLDLSYNSHYFRIAGVTHHLEFIQNFTNLKVLNLSHNNIYTLTDKYNLESKSLVELVFSGNRLDILWNDDDNRYISIFKGLKNLTRLDLSLNRLKHIPNEAFLNLPASLTELHINDNMLKFFNWTLLQQFPRLELLDLRGNKLLFLTDSLSDFTSSLRTLLLSHNRISHLPSGFLSEVSSLKHLDLSSNLLKTINKSALETKTTTKLSMLELHGNPFECTCDIGDFRRWMDEHLNVKIPRLVDVICASPGDQRGKSIVSLELTTCVSDVTAVILFFFTFFITTMVMLAALAHHLFYWDVWFIYNVCLAKVKGYRSLSTSQTFYDAYISYDTKDASVTDWVINELRYHLEESRDKNVLLCLEERDWDPGLAIIDNLMQSINQSKKTVFVLTKKYAKSWNFKTAFYLALQRLMDENMDVIIFILLEPVLQHSQYLRLRQRICKSSILQWPDNPKAEGLFWQTLRNVVLTENDSRYNNMYVDSIKQY.

Residues 1 to 26 (MENMFLQSSMLTCIFLLISGSCELCA) form the signal peptide. Over 27-827 (EENFSRSYPC…ELTTCVSDVT (801 aa)) the chain is Extracellular. Residues asparagine 29, asparagine 42, asparagine 80, asparagine 88, and asparagine 115 are each glycosylated (N-linked (GlcNAc...) asparagine). Cysteine 36 and cysteine 49 form a disulfide bridge. LRR repeat units follow at residues 126–147 (NLRE…LPES), 148–168 (LTEL…GISR), 171–193 (NLKN…TNIE), 202–223 (NLEL…LPSS), 224–244 (LRKL…DFKG), and 247–268 (NLTL…FPCV). Residue asparagine 160 is glycosylated (N-linked (GlcNAc...) asparagine). Cysteine 181 and cysteine 187 are joined by a disulfide. Residue asparagine 247 is glycosylated (N-linked (GlcNAc...) asparagine). 2 cysteine pairs are disulfide-bonded: cysteine 257/cysteine 270 and cysteine 260/cysteine 267. N-linked (GlcNAc...) asparagine glycosylation is found at asparagine 285 and asparagine 293. LRR repeat units follow at residues 288-309 (QLRY…WFKN), 312-334 (HLKV…AFLT), and 338-360 (RLEI…INIS). N-linked (GlcNAc...) asparagine glycans are attached at residues asparagine 358 and asparagine 362. LRR repeat units lie at residues 368–389 (SLRA…DFQP), 395–416 (NLST…LFQN), and 419–440 (NLEI…TRQS). N-linked (GlcNAc...) asparagine glycosylation is found at asparagine 395 and asparagine 416. An N-linked (GlcNAc...) asparagine glycan is attached at asparagine 443. Cysteine 479 and cysteine 509 are disulfide-bonded. 4 LRR repeats span residues 482–503 (YGKA…QFEN), 506–527 (DIAC…TEFS), 531–551 (HVKY…SALT), and 555–577 (DLEV…THHL). N-linked (GlcNAc...) asparagine glycosylation is found at asparagine 511 and asparagine 546. 2 N-linked (GlcNAc...) asparagine glycosylation sites follow: asparagine 582 and asparagine 590. LRR repeat units follow at residues 585–606 (NLKV…YNLE), 609–630 (SLVE…DDNR), 640–661 (NLTR…AFLN), 665–685 (SLTE…TLLQ), 689–710 (RLEL…LSDF), 713–734 (SLRT…FLSE), and 737–758 (SLKH…ALET). N-linked (GlcNAc...) asparagine glycans are attached at residues asparagine 640 and asparagine 680. N-linked (GlcNAc...) asparagine glycosylation occurs at asparagine 752. The LRRCT domain occupies 772–824 (NPFECTCDIGDFRRWMDEHLNVKIPRLVDVICASPGDQRGKSIVSLELTTCVS). Residues cysteine 776 and cysteine 803 are joined by a disulfide bond. A helical transmembrane segment spans residues 828 to 848 (AVILFFFTFFITTMVMLAALA). At 849–1041 (HHLFYWDVWF…NMYVDSIKQY (193 aa)) the chain is on the cytoplasmic side. In terms of domain architecture, TIR spans 878 to 1022 (TFYDAYISYD…LFWQTLRNVV (145 aa)).

Belongs to the Toll-like receptor family. In terms of assembly, homodimer. Interacts with MYD88 via their respective TIR domains. Interacts with UNC93B1. Interacts with BTK. Interacts with SMPDL3B. Post-translationally, ubiquitinated by RNF216; leading to degradation by the proteasome. Proteolytic processing occurs in monocytes and monocyte-derived macrophages by both furin-like proprotein convertase and cathepsins. The cleavage is necessary for dimer formation and subsequent activation. In terms of tissue distribution, expressed in myeloid dendritic cells, monocytes, and monocyte-derived dendritic cells.

The protein localises to the endosome membrane. With respect to regulation, activated by RNAs having enough uridines. Functionally, endosomal receptor that plays a key role in innate and adaptive immunity. Controls host immune response against pathogens through recognition of RNA degradation products specific to microorganisms that are initially processed by RNASET2. Recognizes GU-rich single-stranded RNA (GU-rich RNA) derived from SARS-CoV-2, SARS-CoV-1 and HIV-1 viruses. Upon binding to agonists, undergoes dimerization that brings TIR domains from the two molecules into direct contact, leading to the recruitment of TIR-containing downstream adapter MYD88 through homotypic interaction. In turn, the Myddosome signaling complex is formed involving IRAK4, IRAK1, TRAF6, TRAF3 leading to activation of downstream transcription factors NF-kappa-B and IRF7 to induce pro-inflammatory cytokines and interferons, respectively. This Homo sapiens (Human) protein is Toll-like receptor 8.